Here is a 501-residue protein sequence, read N- to C-terminus: Cyclin-dependent kinase 19 (501 aa).

The residue at position 1 (methionine 1) is an N-acetylmethionine. Residues glutamate 21–phenylalanine 335 enclose the Protein kinase domain. Residues valine 27–valine 35 and lysine 52 contribute to the ATP site. Aspartate 151 functions as the Proton acceptor in the catalytic mechanism. Residues aspartate 362–tyrosine 501 form a disordered region. Residues asparagine 371–proline 392 show a composition bias toward low complexity. The span at threonine 408–alanine 421 shows a compositional bias: gly residues. Residue serine 449 is modified to Phosphoserine. A compositionally biased stretch (low complexity) spans tyrosine 467 to serine 495.

This sequence belongs to the protein kinase superfamily. CMGC Ser/Thr protein kinase family. CDC2/CDKX subfamily.

It is found in the cytoplasm. The protein localises to the perinuclear region. The protein resides in the nucleus. It carries out the reaction L-seryl-[protein] + ATP = O-phospho-L-seryl-[protein] + ADP + H(+). The enzyme catalyses L-threonyl-[protein] + ATP = O-phospho-L-threonyl-[protein] + ADP + H(+). In Mus musculus (Mouse), this protein is Cyclin-dependent kinase 19 (Cdk19).